A 253-amino-acid chain; its full sequence is BRI3-binding protein (253 aa).

4 helical membrane-spanning segments follow: residues Val19–Gln39, Ala131–Phe151, Phe164–His181, and Ala190–Trp210. The stretch at Ser219–Lys253 forms a coiled coil. At Ser250 the chain carries Phosphoserine.

Interacts with LETMD1. Interacts with BRI3. Interacts with BRI3; the interaction is weak. Interacts with TMEM238L.

Its subcellular location is the mitochondrion outer membrane. Involved in tumorigenesis and may function by stabilizing p53/TP53. In Mus musculus (Mouse), this protein is BRI3-binding protein.